The chain runs to 544 residues: Lysophosphatidylcholine acyltransferase 2 (544 aa).

Residues 1-58 (MNRCAEAAAVAATVPGSGVGDSGLRPPMVPRQASFFPPPVPNPFVQQTRISAARRLQM) are Cytoplasmic-facing. The helical; Signal-anchor for type II membrane protein transmembrane segment at 59-79 (ILLGIILLPVRALLVGLVLLL) threads the bilayer. The Lumenal portion of the chain corresponds to 80–544 (AWPFAVISTV…EEGTSGKKVD (465 aa)). Residues 146–151 (HSTFFD) carry the HXXXXD motif motif. The EGTC motif signature appears at 220–223 (EGTC). EF-hand domains are found at residues 391–426 (PVSDVLRQLFALFDRNNDGSIDFREYVIGLAVLCNP) and 428–463 (NTEDIIQVAFKLFDVDEDGYITEEEFCTILQASLGV). Positions 404, 406, 408, 410, 415, 441, 443, 445, 447, and 452 each coordinate Ca(2+). Residues 520–530 (TAPSVASNKVS) show a composition bias toward polar residues. The tract at residues 520–544 (TAPSVASNKVSPESHEEGTSGKKVD) is disordered. Basic and acidic residues predominate over residues 531–544 (PESHEEGTSGKKVD).

Belongs to the 1-acyl-sn-glycerol-3-phosphate acyltransferase family.

Its subcellular location is the endoplasmic reticulum membrane. It localises to the golgi apparatus membrane. The protein localises to the cell membrane. The protein resides in the lipid droplet. The catalysed reaction is a 1-acyl-sn-glycero-3-phosphocholine + an acyl-CoA = a 1,2-diacyl-sn-glycero-3-phosphocholine + CoA. It catalyses the reaction a 1-O-alkyl-sn-glycero-3-phosphocholine + acetyl-CoA = a 1-O-alkyl-2-acetyl-sn-glycero-3-phosphocholine + CoA. It carries out the reaction a 1-acyl-sn-glycero-3-phosphate + an acyl-CoA = a 1,2-diacyl-sn-glycero-3-phosphate + CoA. The enzyme catalyses a 1-O-(1Z-alkenyl)-sn-glycero-3-phosphocholine + an acyl-CoA = a 1-O-(1Z-alkenyl)-2-acyl-sn-glycero-3-phosphocholine + CoA. The catalysed reaction is 1-hexadecanoyl-sn-glycero-3-phosphate + (9Z)-octadecenoyl-CoA = 1-hexadecanoyl-2-(9Z-octadecenoyl)-sn-glycero-3-phosphate + CoA. It catalyses the reaction 1-(9Z-octadecenoyl)-sn-glycero-3-phosphate + (9Z)-octadecenoyl-CoA = 1,2-di-(9Z-octadecenoyl)-sn-glycero-3-phosphate + CoA. It carries out the reaction 1-(9Z-octadecenoyl)-sn-glycero-3-phosphate + hexadecanoyl-CoA = 1-(9Z)-octadecenoyl-2-hexadecanoyl-sn-glycero-3-phosphate + CoA. The enzyme catalyses 1-heptadecanoyl-sn-glycero-3-phosphate + (9Z)-octadecenoyl-CoA = 1-heptadecanoyl-2-(9Z)-octadecenoyl-sn-glycero-3-phosphate + CoA. The catalysed reaction is 1-octadecanoyl-sn-glycero-3-phosphate + (9Z)-octadecenoyl-CoA = 1-octadecanoyl-2-(9Z-octadecenoyl)-sn-glycero-3-phosphate + CoA. It catalyses the reaction heptadecanoyl-CoA + 1-(9Z-octadecenoyl)-sn-glycero-3-phosphate = 1-(9Z)-octadecenoyl-2-heptadecanoyl-sn-glycero-3-phosphate + CoA. It carries out the reaction 1-(9Z-octadecenoyl)-sn-glycero-3-phosphate + (9Z,12Z)-octadecadienoyl-CoA = 1-(9Z)-octadecenoyl-2-(9Z,12Z)-octadecadienoyl-sn-glycero-3-phosphate + CoA. The enzyme catalyses 1-(9Z-octadecenoyl)-sn-glycero-3-phosphate + tetradecanoyl-CoA = 1-(9Z)-octadecenoyl-2-tetradecanoyl-sn-glycero-3-phosphate + CoA. The catalysed reaction is pentadecanoyl-CoA + 1-(9Z-octadecenoyl)-sn-glycero-3-phosphate = 1-(9Z)-octadecenoyl-2-pentadecanoyl-sn-glycero-3-phosphate + CoA. It catalyses the reaction nonadecanoyl-CoA + 1-(9Z-octadecenoyl)-sn-glycero-3-phosphate = 1-(9Z)-octadecenoyl-2-nonadecanoyl-sn-glycero-3-phosphate + CoA. It carries out the reaction 1-hexadecanoyl-sn-glycero-3-phosphocholine + (9Z)-octadecenoyl-CoA = 1-hexadecanoyl-2-(9Z-octadecenoyl)-sn-glycero-3-phosphocholine + CoA. The enzyme catalyses 1-O-hexadecyl-sn-glycero-3-phosphocholine + acetyl-CoA = 1-O-hexadecyl-2-acetyl-sn-glycero-3-phosphocholine + CoA. The catalysed reaction is 1-O-octadecyl-sn-glycero-3-phosphocholine + acetyl-CoA = 1-O-octadecyl-2-acetyl-sn-glycero-3-phosphocholine + CoA. It catalyses the reaction 1-hexadecanoyl-sn-glycero-3-phosphocholine + acetyl-CoA = 1-hexadecanoyl-2-acetyl-sn-glycero-3-phosphocholine + CoA. It carries out the reaction 1-octadecanoyl-sn-glycero-3-phosphocholine + acetyl-CoA = 1-octadecanoyl-2-acetyl-sn-glycero-3-phosphocholine + CoA. The enzyme catalyses a 1-O-(1Z-alkenyl)-sn-glycero-3-phosphocholine + acetyl-CoA = 1-O-(1Z)-alkenyl-2-acetyl-sn-glycero-3-phosphocholine + CoA. The catalysed reaction is 1-O-octadecyl-sn-glycero-3-phosphocholine + (5Z,8Z,11Z,14Z)-eicosatetraenoyl-CoA = 1-O-octadecyl-2-(5Z,8Z,11Z,14Z)-eicosatetraenoyl-sn-glycero-3-phosphocholine + CoA. It functions in the pathway lipid metabolism; phospholipid metabolism. In terms of biological role, exhibits both acyltransferase and acetyltransferase activities. Activity is calcium-dependent. Catalyzes the conversion of lysophosphatidylcholine (1-acyl-sn-glycero-3-phosphocholine or LPC) into phosphatidylcholine (1,2-diacyl-sn-glycero-3-phosphocholine or PC). Catalyzes the conversion 1-acyl-sn-glycerol-3-phosphate (lysophosphatidic acid or LPA) into 1,2-diacyl-sn-glycerol-3-phosphate (phosphatidic acid or PA) by incorporating an acyl moiety at the sn-2 position of the glycerol backbone. Involved in platelet-activating factor (PAF) biosynthesis by catalyzing the conversion of the PAF precursor, 1-O-alkyl-sn-glycero-3-phosphocholine (lyso-PAF) into 1-O-alkyl-2-acetyl-sn-glycero-3-phosphocholine (PAF). Also converts lyso-PAF to 1-O-alkyl-2-acyl-sn-glycero-3-phosphocholine (PC), a major component of cell membranes and a PAF precursor. Under resting conditions, acyltransferase activity is preferred. Upon acute inflammatory stimulus, acetyltransferase activity is enhanced and PAF synthesis increases. Involved in the regulation of lipid droplet number and size. The polypeptide is Lysophosphatidylcholine acyltransferase 2 (Lpcat2) (Rattus norvegicus (Rat)).